Consider the following 820-residue polypeptide: Mitogen-activated protein kinase kinase kinase kinase 2 (820 aa).

The 258-residue stretch at 16–273 (FELLQRVGAG…AEKLLQHPFT (258 aa)) folds into the Protein kinase domain. ATP-binding positions include 22–30 (VGAGTYGDV) and Lys-45. Asp-136 acts as the Proton acceptor in catalysis. Positions 294-314 (LGTPSPEDCELETYDMFPDTI) are PEST1. A Phosphoserine modification is found at Ser-328. The tract at residues 344–360 (ETDPLNEPWEEEWTLLG) is PEST2. The tract at residues 387 to 442 (SEFQELDSPDDTMGTIKRAPFLGPLPTDPPAEEPLSSPPGTLPPPPSGPNSSPLLP) is disordered. Ser-394 carries the phosphoserine modification. The interval 405–448 (APFLGPLPTDPPAEEPLSSPPGTLPPPPSGPNSSPLLPTAWATM) is PEST3. Positions 422-434 (SSPPGTLPPPPSG) are enriched in pro residues. Positions 482–793 (PLRIHAAVTW…IFRVLGAHRD (312 aa)) constitute a CNH domain.

This sequence belongs to the protein kinase superfamily. STE Ser/Thr protein kinase family. STE20 subfamily. In terms of assembly, interacts with TRAF2, TRAF6, MAP3K1/MEKK1 and MAP3K11/MLK3. Interacts with RAB8A. The cofactor is Mg(2+). Post-translationally, polyubiquitinated through 'Lys-48'-polyubiquitin chains, allowing proteasomal turnover. Ubiquitination requires the kinase activity of MAP4K2/GCK. Autophosphorylated in response to tumor necrosis factor (TNF), endotoxins or pro-inflammatory stimuli. Autophosphorylation leads to activation. As to expression, highly expressed in germinal center but not mantle zone B-cells. Also expressed in lung, brain and placenta and at lower levels in other tissues examined.

The protein localises to the cytoplasm. Its subcellular location is the basolateral cell membrane. The protein resides in the golgi apparatus membrane. The catalysed reaction is L-seryl-[protein] + ATP = O-phospho-L-seryl-[protein] + ADP + H(+). It carries out the reaction L-threonyl-[protein] + ATP = O-phospho-L-threonyl-[protein] + ADP + H(+). Its activity is regulated as follows. The tumor necrosis factor (TNF), as well as endotoxins and pro-inflammatory stimuli such as polyinosine-polycytidine (poly(IC)), lipopolysaccharides (LPS), peptidoglycan (PGN), flagellin, or lipid A activate MAP4K2 by promoting its autophosphorylation. Functionally, serine/threonine-protein kinase which acts as an essential component of the MAP kinase signal transduction pathway. Acts as a MAPK kinase kinase kinase (MAP4K) and is an upstream activator of the stress-activated protein kinase/c-Jun N-terminal kinase (SAP/JNK) signaling pathway and to a lesser extent of the p38 MAPKs signaling pathway. Required for the efficient activation of JNKs by TRAF6-dependent stimuli, including pathogen-associated molecular patterns (PAMPs) such as polyinosine-polycytidine (poly(IC)), lipopolysaccharides (LPS), lipid A, peptidoglycan (PGN), or bacterial flagellin. To a lesser degree, IL-1 and engagement of CD40 also stimulate MAP4K2-mediated JNKs activation. The requirement for MAP4K2/GCK is most pronounced for LPS signaling, and extends to LPS stimulation of c-Jun phosphorylation and induction of IL-8. Enhances MAP3K1 oligomerization, which may relieve N-terminal mediated MAP3K1 autoinhibition and lead to activation following autophosphorylation. Also mediates the SAP/JNK signaling pathway and the p38 MAPKs signaling pathway through activation of the MAP3Ks MAP3K10/MLK2 and MAP3K11/MLK3. May play a role in the regulation of vesicle targeting or fusion. regulation of vesicle targeting or fusion. Activator of the Hippo signaling pathway which plays a pivotal role in organ size control and tumor suppression by restricting proliferation and promoting apoptosis. MAP4Ks act in parallel to and are partially redundant with STK3/MST2 and STK4/MST2 in the phosphorylation and activation of LATS1/2, and establish MAP4Ks as components of the expanded Hippo pathway. This chain is Mitogen-activated protein kinase kinase kinase kinase 2, found in Homo sapiens (Human).